Consider the following 212-residue polypeptide: Probable GTP-binding protein EngB (212 aa).

Residues 27–201 enclose the EngB-type G domain; it reads GGIEIAFAGR…TRILSDWYQP (175 aa). Residues 35–42, 62–66, 80–83, 147–150, and 180–182 each bind GTP; these read GRSNAGKS, GRTQL, DLPG, TKAD, and FSS. Mg(2+) contacts are provided by Ser42 and Thr64.

It belongs to the TRAFAC class TrmE-Era-EngA-EngB-Septin-like GTPase superfamily. EngB GTPase family. Requires Mg(2+) as cofactor.

Its function is as follows. Necessary for normal cell division and for the maintenance of normal septation. The chain is Probable GTP-binding protein EngB from Tolumonas auensis (strain DSM 9187 / NBRC 110442 / TA 4).